The primary structure comprises 348 residues: Uroporphyrinogen decarboxylase (348 aa).

Residues 27–31, Phe46, Asp76, Tyr152, Ser207, and His320 contribute to the substrate site; that span reads RQAGR.

This sequence belongs to the uroporphyrinogen decarboxylase family. As to quaternary structure, homodimer.

It localises to the cytoplasm. The enzyme catalyses uroporphyrinogen III + 4 H(+) = coproporphyrinogen III + 4 CO2. Its pathway is porphyrin-containing compound metabolism; protoporphyrin-IX biosynthesis; coproporphyrinogen-III from 5-aminolevulinate: step 4/4. Catalyzes the decarboxylation of four acetate groups of uroporphyrinogen-III to yield coproporphyrinogen-III. This chain is Uroporphyrinogen decarboxylase, found in Bacillus thuringiensis (strain Al Hakam).